The sequence spans 257 residues: Pyridoxine 5'-phosphate synthase (257 aa).

Asn-6 is a binding site for 3-amino-2-oxopropyl phosphate. 8–9 provides a ligand contact to 1-deoxy-D-xylulose 5-phosphate; sequence DH. 3-amino-2-oxopropyl phosphate is bound at residue Arg-17. His-42 (proton acceptor) is an active-site residue. 2 residues coordinate 1-deoxy-D-xylulose 5-phosphate: Arg-44 and His-49. Glu-69 acts as the Proton acceptor in catalysis. Residue Thr-99 participates in 1-deoxy-D-xylulose 5-phosphate binding. His-211 functions as the Proton donor in the catalytic mechanism. Residues Gly-212 and 233-234 contribute to the 3-amino-2-oxopropyl phosphate site; that span reads GQ.

The protein belongs to the PNP synthase family. In terms of assembly, homooctamer; tetramer of dimers.

It localises to the cytoplasm. The enzyme catalyses 3-amino-2-oxopropyl phosphate + 1-deoxy-D-xylulose 5-phosphate = pyridoxine 5'-phosphate + phosphate + 2 H2O + H(+). Its pathway is cofactor biosynthesis; pyridoxine 5'-phosphate biosynthesis; pyridoxine 5'-phosphate from D-erythrose 4-phosphate: step 5/5. Functionally, catalyzes the complicated ring closure reaction between the two acyclic compounds 1-deoxy-D-xylulose-5-phosphate (DXP) and 3-amino-2-oxopropyl phosphate (1-amino-acetone-3-phosphate or AAP) to form pyridoxine 5'-phosphate (PNP) and inorganic phosphate. This is Pyridoxine 5'-phosphate synthase from Campylobacter fetus subsp. fetus (strain 82-40).